Consider the following 345-residue polypeptide: Dimethyladenosine transferase 1, mitochondrial (345 aa).

The transit peptide at 1–27 (MAASGKLGTFRLPPLPTIREIIKLFGL) directs the protein to the mitochondrion. Residues L38, G63, E85, K86, D111, V112, and N141 each contribute to the S-adenosyl-L-methionine site.

It belongs to the class I-like SAM-binding methyltransferase superfamily. rRNA adenine N(6)-methyltransferase family. KsgA subfamily. Interacts with mitochondrial RNA polymerase POLRMT. Interacts with TFAM. Remains bound to the maturing mtSSU until the late stages of assembly. Ubiquitously expressed.

The protein localises to the mitochondrion. It carries out the reaction adenosine(N)/adenosine(N+1) in rRNA + 4 S-adenosyl-L-methionine = N(6)-dimethyladenosine(N)/N(6)-dimethyladenosine(N+1) in rRNA + 4 S-adenosyl-L-homocysteine + 4 H(+). Functionally, mitochondrial methyltransferase which uses S-adenosyl methionine to dimethylate two highly conserved adjacent adenosine residues (A1006 and A1007) within the loop of helix 45 at the 3-prime end of 12S rRNA, thereby regulating the assembly or stability of the small subunit of the mitochondrial ribosome. Also required for basal transcription of mitochondrial DNA, probably via its interaction with POLRMT and TFAM. Stimulates transcription independently of the methyltransferase activity. The sequence is that of Dimethyladenosine transferase 1, mitochondrial (Tfb1m) from Mus musculus (Mouse).